The sequence spans 100 residues: Large ribosomal subunit protein uL23 (100 aa).

It belongs to the universal ribosomal protein uL23 family. As to quaternary structure, part of the 50S ribosomal subunit. Contacts protein L29, and trigger factor when it is bound to the ribosome.

One of the early assembly proteins it binds 23S rRNA. One of the proteins that surrounds the polypeptide exit tunnel on the outside of the ribosome. Forms the main docking site for trigger factor binding to the ribosome. This Prochlorococcus marinus subsp. pastoris (strain CCMP1986 / NIES-2087 / MED4) protein is Large ribosomal subunit protein uL23.